Here is a 187-residue protein sequence, read N- to C-terminus: Translation machinery-associated protein 22 (187 aa).

Residues 94–165 enclose the SUI1 domain; the sequence is VTIKRIERNK…EIEEFILEKY (72 aa).

This sequence belongs to the DENR family. Interacts with the 40S ribosomal subunit.

The protein resides in the cytoplasm. The protein is Translation machinery-associated protein 22 (tma-22) of Neurospora crassa (strain ATCC 24698 / 74-OR23-1A / CBS 708.71 / DSM 1257 / FGSC 987).